Here is a 157-residue protein sequence, read N- to C-terminus: Increased recombination centers protein 23 (157 aa).

The Cytoplasmic segment spans residues 1–6; sequence MIEALE. The helical transmembrane segment at 7-29 threads the bilayer; the sequence is IVLLLVIQSLQYICRTCIAFLLI. At 30–33 the chain is on the lumenal side; it reads PFLG. The chain crosses the membrane as a helical span at residues 34–56; the sequence is LYAFDLFLYVYRMILYLSQMFNY. Topologically, residues 57–157 are cytoplasmic; sequence KRKLGRSKTN…EEGYYIAGSI (101 aa).

It is found in the endoplasmic reticulum membrane. Its function is as follows. Is probably involved in a pathway contributing to genomic integrity. This chain is Increased recombination centers protein 23 (IRC23), found in Saccharomyces cerevisiae (strain ATCC 204508 / S288c) (Baker's yeast).